Consider the following 333-residue polypeptide: Uroporphyrinogen decarboxylase (333 aa).

Substrate is bound by residues 21-25, Asp70, Tyr139, Ser194, and His309; that span reads RQVGR.

Belongs to the uroporphyrinogen decarboxylase family. As to quaternary structure, homodimer.

The protein resides in the cytoplasm. It carries out the reaction uroporphyrinogen III + 4 H(+) = coproporphyrinogen III + 4 CO2. It functions in the pathway porphyrin-containing compound metabolism; protoporphyrin-IX biosynthesis; coproporphyrinogen-III from 5-aminolevulinate: step 4/4. Catalyzes the decarboxylation of four acetate groups of uroporphyrinogen-III to yield coproporphyrinogen-III. The polypeptide is Uroporphyrinogen decarboxylase (Chlamydia caviae (strain ATCC VR-813 / DSM 19441 / 03DC25 / GPIC) (Chlamydophila caviae)).